Here is a 251-residue protein sequence, read N- to C-terminus: Triosephosphate isomerase (251 aa).

Residues Asn-10 and Lys-12 each coordinate substrate. His-95 acts as the Electrophile in catalysis. Glu-167 functions as the Proton acceptor in the catalytic mechanism.

The protein belongs to the triosephosphate isomerase family. Homodimer.

It carries out the reaction D-glyceraldehyde 3-phosphate = dihydroxyacetone phosphate. It functions in the pathway carbohydrate biosynthesis; gluconeogenesis. Its pathway is carbohydrate degradation; glycolysis; D-glyceraldehyde 3-phosphate from glycerone phosphate: step 1/1. The sequence is that of Triosephosphate isomerase (TPI) from Coprinopsis cinerea (strain Okayama-7 / 130 / ATCC MYA-4618 / FGSC 9003) (Inky cap fungus).